The primary structure comprises 267 residues: GTP cyclohydrolase FolE2 (267 aa).

It belongs to the GTP cyclohydrolase IV family.

It catalyses the reaction GTP + H2O = 7,8-dihydroneopterin 3'-triphosphate + formate + H(+). Its pathway is cofactor biosynthesis; 7,8-dihydroneopterin triphosphate biosynthesis; 7,8-dihydroneopterin triphosphate from GTP: step 1/1. Converts GTP to 7,8-dihydroneopterin triphosphate. The sequence is that of GTP cyclohydrolase FolE2 from Cupriavidus necator (strain ATCC 17699 / DSM 428 / KCTC 22496 / NCIMB 10442 / H16 / Stanier 337) (Ralstonia eutropha).